Consider the following 67-residue polypeptide: MSLELLSKLETKIQTALETIELLKMELEEEKQKSIGLAEQNQQLSQDLNSWNEKVTGLVGLLNEEVN.

Positions 3 to 59 form a coiled coil; sequence LELLSKLETKIQTALETIELLKMELEEEKQKSIGLAEQNQQLSQDLNSWNEKVTGLV.

It belongs to the ZapB family. In terms of assembly, homodimer. The ends of the coiled-coil dimer bind to each other, forming polymers. Interacts with FtsZ.

The protein localises to the cytoplasm. In terms of biological role, non-essential, abundant cell division factor that is required for proper Z-ring formation. It is recruited early to the divisome by direct interaction with FtsZ, stimulating Z-ring assembly and thereby promoting cell division earlier in the cell cycle. Its recruitment to the Z-ring requires functional FtsA or ZipA. The chain is Cell division protein ZapB from Shewanella woodyi (strain ATCC 51908 / MS32).